The following is a 107-amino-acid chain: Large ribosomal subunit protein uL24 (107 aa).

It belongs to the universal ribosomal protein uL24 family. In terms of assembly, part of the 50S ribosomal subunit.

Its function is as follows. One of two assembly initiator proteins, it binds directly to the 5'-end of the 23S rRNA, where it nucleates assembly of the 50S subunit. One of the proteins that surrounds the polypeptide exit tunnel on the outside of the subunit. The protein is Large ribosomal subunit protein uL24 of Coxiella burnetii (strain Dugway 5J108-111).